Here is a 119-residue protein sequence, read N- to C-terminus: Methylglyoxal synthase (119 aa).

The MGS-like domain maps to 1-119 (MKIALIAHDK…ESAKLIMADI (119 aa)). Residues H8, K12, 34–37 (TGTT), and 54–55 (SG) contribute to the substrate site. D60 functions as the Proton donor/acceptor in the catalytic mechanism. Substrate is bound at residue H87.

It belongs to the methylglyoxal synthase family.

The catalysed reaction is dihydroxyacetone phosphate = methylglyoxal + phosphate. Catalyzes the formation of methylglyoxal from dihydroxyacetone phosphate. This chain is Methylglyoxal synthase, found in Clostridium perfringens (strain ATCC 13124 / DSM 756 / JCM 1290 / NCIMB 6125 / NCTC 8237 / Type A).